The sequence spans 145 residues: UPF0735 ACT domain-containing protein CPE1414 (145 aa).

The ACT domain occupies isoleucine 69–methionine 144.

This sequence belongs to the UPF0735 family.

The polypeptide is UPF0735 ACT domain-containing protein CPE1414 (Clostridium perfringens (strain 13 / Type A)).